A 143-amino-acid chain; its full sequence is Small ribosomal subunit protein eS19B (143 aa).

It belongs to the eukaryotic ribosomal protein eS19 family. Component of the small ribosomal subunit (SSU). Mature yeast ribosomes consist of a small (40S) and a large (60S) subunit. The 40S small subunit contains 1 molecule of ribosomal RNA (18S rRNA) and at least 33 different proteins. The large 60S subunit contains 3 rRNA molecules (25S, 5.8S and 5S rRNA) and at least 46 different proteins.

The protein resides in the cytoplasm. The protein localises to the nucleus. Functionally, component of the ribosome, a large ribonucleoprotein complex responsible for the synthesis of proteins in the cell. The small ribosomal subunit (SSU) binds messenger RNAs (mRNAs) and translates the encoded message by selecting cognate aminoacyl-transfer RNA (tRNA) molecules. The large subunit (LSU) contains the ribosomal catalytic site termed the peptidyl transferase center (PTC), which catalyzes the formation of peptide bonds, thereby polymerizing the amino acids delivered by tRNAs into a polypeptide chain. The nascent polypeptides leave the ribosome through a tunnel in the LSU and interact with protein factors that function in enzymatic processing, targeting, and the membrane insertion of nascent chains at the exit of the ribosomal tunnel. eS19 is required for proper maturation of the small (40S) ribosomal subunit. Binds to 40S pre-ribosomal particles, probably required after association of NOC4 but before association of ENP1, TSR1 and RIO2 with 20/21S pre-rRNA. The sequence is that of Small ribosomal subunit protein eS19B (rps1902) from Schizosaccharomyces pombe (strain 972 / ATCC 24843) (Fission yeast).